The sequence spans 496 residues: ATP synthase subunit beta (496 aa).

Residue 155–162 (GGAGVGKT) participates in ATP binding.

This sequence belongs to the ATPase alpha/beta chains family. As to quaternary structure, F-type ATPases have 2 components, CF(1) - the catalytic core - and CF(0) - the membrane proton channel. CF(1) has five subunits: alpha(3), beta(3), gamma(1), delta(1), epsilon(1). CF(0) has three main subunits: a(1), b(2) and c(9-12). The alpha and beta chains form an alternating ring which encloses part of the gamma chain. CF(1) is attached to CF(0) by a central stalk formed by the gamma and epsilon chains, while a peripheral stalk is formed by the delta and b chains.

The protein localises to the cell membrane. The enzyme catalyses ATP + H2O + 4 H(+)(in) = ADP + phosphate + 5 H(+)(out). Functionally, produces ATP from ADP in the presence of a proton gradient across the membrane. The catalytic sites are hosted primarily by the beta subunits. The polypeptide is ATP synthase subunit beta (Karelsulcia muelleri (strain GWSS) (Sulcia muelleri)).